We begin with the raw amino-acid sequence, 785 residues long: (+)-copalyl diphosphate synthase 3, chloroplastic (785 aa).

Residue Lys-238 coordinates substrate. Positions 371 and 373 each coordinate Mg(2+). The short motif at 371 to 374 (DIDD) is the DXDD motif element. Lys-457 is a binding site for substrate.

It belongs to the terpene synthase family. Requires Mg(2+) as cofactor. In terms of tissue distribution, present in both leaves and flowers, with higher levels in leaves.

Its subcellular location is the plastid. It is found in the chloroplast. The enzyme catalyses (2E,6E,10E)-geranylgeranyl diphosphate = (+)-copalyl diphosphate. Its pathway is secondary metabolite biosynthesis; terpenoid biosynthesis. In terms of biological role, involved in the biosynthesis of labdane-type diterpenoid including marrubiin and other labdane-related furanoid diterpenoids with potential applications as anti-diabetics, analgesics or vasorelaxants. Terpene synthase that produces (+)-copalyl diphosphate ((+)-CPP) from geranylgeranyl diphosphate (GGPP). The protein is (+)-copalyl diphosphate synthase 3, chloroplastic of Marrubium vulgare (White horehound).